Consider the following 388-residue polypeptide: Large ribosomal subunit protein uL3B (388 aa).

Basic and acidic residues predominate over residues 1-10; the sequence is MSHCKFEQPR. The tract at residues 1–34 is disordered; it reads MSHCKFEQPRHGSLGFLPRKRASRQRGKVKAFPK. The span at 18 to 31 shows a compositional bias: basic residues; that stretch reads PRKRASRQRGKVKA.

Belongs to the universal ribosomal protein uL3 family. Component of the large ribosomal subunit (LSU). Mature yeast ribosomes consist of a small (40S) and a large (60S) subunit. The 40S small subunit contains 1 molecule of ribosomal RNA (18S rRNA) and at least 33 different proteins. The large 60S subunit contains 3 rRNA molecules (25S, 5.8S and 5S rRNA) and at least 46 different proteins. uL3 forms together with ES39L one of the contact sites for the signal recognition particle that targets ribosomes to the endoplasmic reticulum membrane.

It localises to the cytoplasm. Its function is as follows. Component of the ribosome, a large ribonucleoprotein complex responsible for the synthesis of proteins in the cell. The small ribosomal subunit (SSU) binds messenger RNAs (mRNAs) and translates the encoded message by selecting cognate aminoacyl-transfer RNA (tRNA) molecules. The large subunit (LSU) contains the ribosomal catalytic site termed the peptidyl transferase center (PTC), which catalyzes the formation of peptide bonds, thereby polymerizing the amino acids delivered by tRNAs into a polypeptide chain. The nascent polypeptides leave the ribosome through a tunnel in the LSU and interact with protein factors that function in enzymatic processing, targeting, and the membrane insertion of nascent chains at the exit of the ribosomal tunnel. uL3 plays a role in coordinating processes of accommodating the aminoacyl-tRNA in the PTC. The chain is Large ribosomal subunit protein uL3B (rpl302) from Schizosaccharomyces pombe (strain 972 / ATCC 24843) (Fission yeast).